The chain runs to 94 residues: Pyrimidine/purine nucleoside phosphorylase (94 aa).

This sequence belongs to the nucleoside phosphorylase PpnP family.

The catalysed reaction is a purine D-ribonucleoside + phosphate = a purine nucleobase + alpha-D-ribose 1-phosphate. The enzyme catalyses adenosine + phosphate = alpha-D-ribose 1-phosphate + adenine. It catalyses the reaction cytidine + phosphate = cytosine + alpha-D-ribose 1-phosphate. It carries out the reaction guanosine + phosphate = alpha-D-ribose 1-phosphate + guanine. The catalysed reaction is inosine + phosphate = alpha-D-ribose 1-phosphate + hypoxanthine. The enzyme catalyses thymidine + phosphate = 2-deoxy-alpha-D-ribose 1-phosphate + thymine. It catalyses the reaction uridine + phosphate = alpha-D-ribose 1-phosphate + uracil. It carries out the reaction xanthosine + phosphate = alpha-D-ribose 1-phosphate + xanthine. Functionally, catalyzes the phosphorolysis of diverse nucleosides, yielding D-ribose 1-phosphate and the respective free bases. Can use uridine, adenosine, guanosine, cytidine, thymidine, inosine and xanthosine as substrates. Also catalyzes the reverse reactions. The protein is Pyrimidine/purine nucleoside phosphorylase of Pseudomonas entomophila (strain L48).